The sequence spans 50 residues: Ornatin-E (50 aa).

A Cell attachment site motif is present at residues 42–44; that stretch reads RGD.

It belongs to the ornatin family.

It is found in the secreted. Functionally, potent inhibitor of fibrinogen interaction with platelet receptors expressed on glycoprotein IIb-IIIa complex. May prevent blood from clotting during either feeding and/or storage of ingested blood. The polypeptide is Ornatin-E (Placobdella ornata (Turtle leech)).